The following is a 60-amino-acid chain: MRAKSAIFSRTSLSLCSARLLASSQWVPSSSRNSSAISSRLNPSRCADFTNFTRTTSASP.

The polypeptide is Putative mercuric resistance protein (Shigella flexneri).